Consider the following 313-residue polypeptide: Nucleoside diphosphate-linked moiety X motif 6 (313 aa).

One can recognise a Nudix hydrolase domain in the interval 138 to 270; the sequence is THQVGVAGAV…TSRVARLLLY (133 aa).

This sequence belongs to the Nudix hydrolase family. In terms of assembly, monomer and homodimer.

It localises to the cytoplasm. The protein resides in the nucleus. It is found in the mitochondrion. In terms of biological role, may contribute to the regulation of cell proliferation. This is Nucleoside diphosphate-linked moiety X motif 6 (Nudt6) from Mus musculus (Mouse).